Reading from the N-terminus, the 174-residue chain is MQGEEEGLSRYRLRPPTPREERLVEGFLRAIGFKVNPYAEGMTVLDPGGKFKEVFYLPWGLRRAVERLPLHYSAGLNLGSIGERGFRPSLHLARELAPLCGSPVKCIRLSPRGEKLFLYSRDVYGDNIASHTSGAALVVGSNGQPLGWGVGLSRDGLLIVKPLRDLGWYLRRGG.

This sequence belongs to the UPF0113 family.

The polypeptide is UPF0113 protein APE_0516.1 (Aeropyrum pernix (strain ATCC 700893 / DSM 11879 / JCM 9820 / NBRC 100138 / K1)).